The primary structure comprises 129 residues: Replication initiation control protein YabA (129 aa).

Residues His-103, Cys-105, Cys-119, and Cys-122 each coordinate Zn(2+).

This sequence belongs to the YabA family. Homotetramer. Interacts with both DnaA and DnaN, acting as a bridge between these two proteins. Requires Zn(2+) as cofactor.

It is found in the cytoplasm. The protein resides in the nucleoid. In terms of biological role, involved in control of chromosome replication initiation. Inhibits the cooperative binding of DnaA to the oriC region, thus negatively regulating initiation of chromosome replication. Inhibits the ability of DnaA-ATP to form a helix on DNA; does not disassemble preformed DnaA-DNA helices. Decreases the residence time of DnaA on the chromosome at its binding sites (oriC, replication forks and promoter-binding sites). Tethers DnaA to the replication machinery via the DNA polymerase beta sliding clamp subunit (dnaN). Associates with oriC and other DnaA targets on the chromosome in a DnaA-dependent manner. This is Replication initiation control protein YabA from Listeria monocytogenes serotype 4b (strain CLIP80459).